A 159-amino-acid polypeptide reads, in one-letter code: 3-hydroxyacyl-[acyl-carrier-protein] dehydratase FabZ (159 aa).

The active site involves His-58.

It belongs to the thioester dehydratase family. FabZ subfamily.

The protein resides in the cytoplasm. The enzyme catalyses a (3R)-hydroxyacyl-[ACP] = a (2E)-enoyl-[ACP] + H2O. Functionally, involved in unsaturated fatty acids biosynthesis. Catalyzes the dehydration of short chain beta-hydroxyacyl-ACPs and long chain saturated and unsaturated beta-hydroxyacyl-ACPs. This chain is 3-hydroxyacyl-[acyl-carrier-protein] dehydratase FabZ, found in Helicobacter pylori (strain P12).